The following is a 352-amino-acid chain: Glycerol-1-phosphate dehydrogenase [NAD(P)+] (352 aa).

NAD(+) is bound by residues 98-102 (GKPID) and 120-123 (TAAS). Residue aspartate 125 participates in substrate binding. Serine 129 serves as a coordination point for NAD(+). A substrate-binding site is contributed by aspartate 172. Zn(2+) is bound by residues aspartate 172 and histidine 252. Position 256 (histidine 256) interacts with substrate. A Zn(2+)-binding site is contributed by histidine 268.

It belongs to the glycerol-1-phosphate dehydrogenase family. Requires Zn(2+) as cofactor.

It localises to the cytoplasm. The catalysed reaction is sn-glycerol 1-phosphate + NAD(+) = dihydroxyacetone phosphate + NADH + H(+). It carries out the reaction sn-glycerol 1-phosphate + NADP(+) = dihydroxyacetone phosphate + NADPH + H(+). It functions in the pathway membrane lipid metabolism; glycerophospholipid metabolism. In terms of biological role, catalyzes the NAD(P)H-dependent reduction of dihydroxyacetonephosphate (DHAP or glycerone phosphate) to glycerol 1-phosphate (G1P). The G1P thus generated is used as the glycerophosphate backbone of phospholipids in the cellular membranes of Archaea. In Natronomonas pharaonis (strain ATCC 35678 / DSM 2160 / CIP 103997 / JCM 8858 / NBRC 14720 / NCIMB 2260 / Gabara) (Halobacterium pharaonis), this protein is Glycerol-1-phosphate dehydrogenase [NAD(P)+].